Reading from the N-terminus, the 641-residue chain is ATP-dependent zinc metalloprotease FtsH (641 aa).

Residues 1-16 lie on the Cytoplasmic side of the membrane; it reads MNKQQKPKRSPLRPDY. The chain crosses the membrane as a helical span at residues 17–37; that stretch reads LVIVIIILLAIGMYFFFTEMM. The Extracellular segment spans residues 38 to 131; it reads APKVKQFDEF…VSFVPHVSVD (94 aa). The helical transmembrane segment at 132–152 threads the bilayer; it reads FWNIISTLLLIAAPIVLVVIM. Residues 153–641 are Cytoplasmic-facing; that stretch reads FRSMSSQSNK…EVEEDSKKSE (489 aa). 222-229 provides a ligand contact to ATP; it reads GQPGTGKT. H444 is a Zn(2+) binding site. E445 is an active-site residue. Residues H448 and D520 each coordinate Zn(2+).

This sequence in the central section; belongs to the AAA ATPase family. The protein in the C-terminal section; belongs to the peptidase M41 family. Homohexamer. Requires Zn(2+) as cofactor.

It is found in the cell membrane. Functionally, acts as a processive, ATP-dependent zinc metallopeptidase for both cytoplasmic and membrane proteins. Plays a role in the quality control of integral membrane proteins. In Acholeplasma laidlawii (strain PG-8A), this protein is ATP-dependent zinc metalloprotease FtsH.